A 378-amino-acid chain; its full sequence is Chaperone protein DnaJ (378 aa).

In terms of domain architecture, J spans 5 to 70 (DYYEVLGVAK…QKRAAYDQYG (66 aa)). The CR-type zinc finger occupies 138–216 (GYDTQIRVPS…CHGSGKVKET (79 aa)). 8 residues coordinate Zn(2+): C151, C154, C168, C171, C190, C193, C204, and C207. CXXCXGXG motif repeat units follow at residues 151 to 158 (CEVCHGSG), 168 to 175 (CPTCHGQG), 190 to 197 (CPKCHGTG), and 204 to 211 (CAHCHGSG).

The protein belongs to the DnaJ family. Homodimer. The cofactor is Zn(2+).

Its subcellular location is the cytoplasm. Functionally, participates actively in the response to hyperosmotic and heat shock by preventing the aggregation of stress-denatured proteins and by disaggregating proteins, also in an autonomous, DnaK-independent fashion. Unfolded proteins bind initially to DnaJ; upon interaction with the DnaJ-bound protein, DnaK hydrolyzes its bound ATP, resulting in the formation of a stable complex. GrpE releases ADP from DnaK; ATP binding to DnaK triggers the release of the substrate protein, thus completing the reaction cycle. Several rounds of ATP-dependent interactions between DnaJ, DnaK and GrpE are required for fully efficient folding. Also involved, together with DnaK and GrpE, in the DNA replication of plasmids through activation of initiation proteins. The sequence is that of Chaperone protein DnaJ from Burkholderia vietnamiensis (strain G4 / LMG 22486) (Burkholderia cepacia (strain R1808)).